The sequence spans 186 residues: ATP synthase subunit b, chloroplastic (186 aa).

The chain crosses the membrane as a helical span at residues 27 to 43 (IFETNILNLAVVLGILL).

The protein belongs to the ATPase B chain family. As to quaternary structure, F-type ATPases have 2 components, F(1) - the catalytic core - and F(0) - the membrane proton channel. F(1) has five subunits: alpha(3), beta(3), gamma(1), delta(1), epsilon(1). F(0) has four main subunits: a(1), b(1), b'(1) and c(10-14). The alpha and beta chains form an alternating ring which encloses part of the gamma chain. F(1) is attached to F(0) by a central stalk formed by the gamma and epsilon chains, while a peripheral stalk is formed by the delta, b and b' chains.

The protein resides in the plastid. The protein localises to the chloroplast thylakoid membrane. In terms of biological role, f(1)F(0) ATP synthase produces ATP from ADP in the presence of a proton or sodium gradient. F-type ATPases consist of two structural domains, F(1) containing the extramembraneous catalytic core and F(0) containing the membrane proton channel, linked together by a central stalk and a peripheral stalk. During catalysis, ATP synthesis in the catalytic domain of F(1) is coupled via a rotary mechanism of the central stalk subunits to proton translocation. Its function is as follows. Component of the F(0) channel, it forms part of the peripheral stalk, linking F(1) to F(0). This chain is ATP synthase subunit b, chloroplastic, found in Mesostigma viride (Green alga).